A 184-amino-acid polypeptide reads, in one-letter code: Thymidine kinase (184 aa).

Residues Gly-10–Thr-17 and Asp-83–Gln-86 contribute to the ATP site. Glu-84 (proton acceptor) is an active-site residue. Zn(2+) is bound by residues Cys-140, Cys-143, Cys-173, and Cys-176.

It belongs to the thymidine kinase family. Homotetramer.

Its subcellular location is the cytoplasm. It catalyses the reaction thymidine + ATP = dTMP + ADP + H(+). The polypeptide is Thymidine kinase (Thermotoga petrophila (strain ATCC BAA-488 / DSM 13995 / JCM 10881 / RKU-1)).